The primary structure comprises 310 residues: Ribosomal RNA small subunit methyltransferase H (310 aa).

S-adenosyl-L-methionine contacts are provided by residues 32-34 (GGH), Asp52, Phe79, Asp100, and Gln107.

It belongs to the methyltransferase superfamily. RsmH family.

It localises to the cytoplasm. It catalyses the reaction cytidine(1402) in 16S rRNA + S-adenosyl-L-methionine = N(4)-methylcytidine(1402) in 16S rRNA + S-adenosyl-L-homocysteine + H(+). Specifically methylates the N4 position of cytidine in position 1402 (C1402) of 16S rRNA. In Geobacillus thermodenitrificans (strain NG80-2), this protein is Ribosomal RNA small subunit methyltransferase H.